The following is a 339-amino-acid chain: F420-dependent glucose-6-phosphate dehydrogenase (339 aa).

Aspartate 41 is a coenzyme F420-(gamma-Glu)n binding site. The Proton donor role is filled by histidine 42. Residues threonine 78 and 109 to 110 each bind coenzyme F420-(gamma-Glu)n; that span reads TG. Glutamate 111 serves as the catalytic Proton acceptor. Residues asparagine 114, 177–178, and 180–181 each bind coenzyme F420-(gamma-Glu)n; these read SG and AA. Positions 195, 198, 259, and 283 each coordinate substrate.

Belongs to the F420-dependent glucose-6-phosphate dehydrogenase family. As to quaternary structure, homodimer.

It catalyses the reaction oxidized coenzyme F420-(gamma-L-Glu)(n) + D-glucose 6-phosphate + H(+) = 6-phospho-D-glucono-1,5-lactone + reduced coenzyme F420-(gamma-L-Glu)(n). In terms of biological role, catalyzes the coenzyme F420-dependent oxidation of glucose 6-phosphate (G6P) to 6-phosphogluconolactone. The sequence is that of F420-dependent glucose-6-phosphate dehydrogenase from Nakamurella multipartita (strain ATCC 700099 / DSM 44233 / CIP 104796 / JCM 9543 / NBRC 105858 / Y-104) (Microsphaera multipartita).